Reading from the N-terminus, the 906-residue chain is Probable helicase HelY (906 aa).

Positions 26–184 (CSALERGHGV…WIQTVRGDTT (159 aa)) constitute a Helicase ATP-binding domain. ATP is bound at residue 39–46 (APTGAGKT). A DEVH box motif is present at residues 132-135 (DEVH). The region spanning 259 to 463 (GRPEVIAKLD…SYNMTINLVH (205 aa)) is the Helicase C-terminal domain.

This sequence belongs to the helicase family. SKI2 subfamily.

The protein is Probable helicase HelY (helY) of Mycobacterium tuberculosis (strain CDC 1551 / Oshkosh).